Reading from the N-terminus, the 84-residue chain is RQC P-site tRNA stabilizing factor (84 aa).

Residues 1–64 enclose the S4 RNA-binding domain; that stretch reads MRIDKFLQSV…IEEYTILQIP (64 aa).

Belongs to the RqcP family. As to quaternary structure, associates with stalled 50S ribosomal subunits. Binds to RqcH, 23S rRNA and the P-site tRNA. Does not require RqcH for association with 50S subunits.

Key component of the ribosome quality control system (RQC), a ribosome-associated complex that mediates the extraction of incompletely synthesized nascent chains from stalled ribosomes and their subsequent degradation. RqcH recruits Ala-charged tRNA, and with RqcP directs the elongation of stalled nascent chains on 50S ribosomal subunits, leading to non-templated C-terminal alanine extensions (Ala tail). The Ala tail promotes nascent chain degradation. RqcP is associated with the translocation-like movement of the peptidyl-tRNA from the A-site into the P-site. This is RQC P-site tRNA stabilizing factor from Helicobacter pylori (strain J99 / ATCC 700824) (Campylobacter pylori J99).